The following is a 102-amino-acid chain: uncharacterized protein (102 aa).

This is an uncharacterized protein from Escherichia coli (strain K12).